The chain runs to 179 residues: Protein GrpE (179 aa).

The disordered stretch occupies residues 1 to 45 (MSEEKLTQDPTAEEEQTETADQQESADVNWEQEAAHWKAQAEEHQ). Basic and acidic residues predominate over residues 33–45 (EAAHWKAQAEEHQ).

Belongs to the GrpE family. As to quaternary structure, homodimer.

Its subcellular location is the cytoplasm. In terms of biological role, participates actively in the response to hyperosmotic and heat shock by preventing the aggregation of stress-denatured proteins, in association with DnaK and GrpE. It is the nucleotide exchange factor for DnaK and may function as a thermosensor. Unfolded proteins bind initially to DnaJ; upon interaction with the DnaJ-bound protein, DnaK hydrolyzes its bound ATP, resulting in the formation of a stable complex. GrpE releases ADP from DnaK; ATP binding to DnaK triggers the release of the substrate protein, thus completing the reaction cycle. Several rounds of ATP-dependent interactions between DnaJ, DnaK and GrpE are required for fully efficient folding. The polypeptide is Protein GrpE (Brevibacillus choshinensis).